The sequence spans 382 residues: Draxin-A (382 aa).

Residues 1–22 (MMSSSWCLPLALLFSTLAVSHS) form the signal peptide. 3 disordered regions span residues 28 to 213 (THAK…PPSP), 233 to 252 (LPTL…GKMQ), and 275 to 297 (VDAW…SGNV). The segment covering 73-82 (RGAKASSGAG) has biased composition (low complexity). The span at 139 to 149 (GPRKGRGQGHG) shows a compositional bias: basic residues. The span at 190-201 (SVSSAAAATSPS) shows a compositional bias: low complexity. The segment covering 281–290 (SRKKDKRRSK) has biased composition (basic residues). Residues asparagine 291 and asparagine 296 are each glycosylated (N-linked (GlcNAc...) asparagine).

This sequence belongs to the draxin family.

It is found in the secreted. Its function is as follows. Chemorepulsive axon guidance protein required for the development of spinal cord and forebrain commissures. Acts as a chemorepulsive guidance protein for commissural axons during development. Able to inhibit or repel neurite outgrowth from dorsal spinal cord. The protein is Draxin-A (draxin-A) of Salmo salar (Atlantic salmon).